The sequence spans 470 residues: Proline--tRNA ligase (470 aa).

It belongs to the class-II aminoacyl-tRNA synthetase family. ProS type 3 subfamily. Homodimer.

It is found in the cytoplasm. The catalysed reaction is tRNA(Pro) + L-proline + ATP = L-prolyl-tRNA(Pro) + AMP + diphosphate. Catalyzes the attachment of proline to tRNA(Pro) in a two-step reaction: proline is first activated by ATP to form Pro-AMP and then transferred to the acceptor end of tRNA(Pro). This Malacoplasma penetrans (strain HF-2) (Mycoplasma penetrans) protein is Proline--tRNA ligase.